Here is a 323-residue protein sequence, read N- to C-terminus: Extracellular endo-alpha-(1-&gt;5)-L-arabinanase 1 (323 aa).

Residues 1 to 32 (MKKKKTWKRFLHFSSAALAAGLIFTSAAPAEA) form the signal peptide. Residue D44 is the Proton acceptor of the active site. D44 is a substrate binding site. D107 contributes to the Ca(2+) binding site. Substrate is bound by residues G125 and 160 to 163 (NAID). E165 provides a ligand contact to Ca(2+). Residue 180 to 182 (SFW) coordinates substrate. E215 serves as the catalytic Proton donor. A Ca(2+)-binding site is contributed by D287.

This sequence belongs to the glycosyl hydrolase 43 family. Requires Ca(2+) as cofactor.

It is found in the secreted. The enzyme catalyses Endohydrolysis of (1-&gt;5)-alpha-arabinofuranosidic linkages in (1-&gt;5)-arabinans.. It functions in the pathway glycan metabolism; L-arabinan degradation. In terms of biological role, involved in the degradation of arabinan and is a key enzyme in the complete degradation of the plant cell wall. Catalyzes the internal cleavage of alpha-(1-&gt;5)-L-arabinofuranosyl residues of linear 1,5-alpha-L-arabinan and of branched sugar beet arabinan. It displays no activity against heavily substituted arabinans or a range of other polysaccharides (larch wood arabinogalactan, wheat arabinoxylan and p-nitrophenyl-alpha-L-arabinofuranoside). The enzyme activity is progressively reduced as alpha-(1-&gt;5)-chains become shorter or more highly substituted. This Bacillus subtilis (strain 168) protein is Extracellular endo-alpha-(1-&gt;5)-L-arabinanase 1 (abnA).